We begin with the raw amino-acid sequence, 89 residues long: Small ribosomal subunit protein uS19 (89 aa).

It belongs to the universal ribosomal protein uS19 family.

Protein S19 forms a complex with S13 that binds strongly to the 16S ribosomal RNA. The polypeptide is Small ribosomal subunit protein uS19 (Bacteroides thetaiotaomicron (strain ATCC 29148 / DSM 2079 / JCM 5827 / CCUG 10774 / NCTC 10582 / VPI-5482 / E50)).